Consider the following 144-residue polypeptide: MKTYNIVIASDHSGYELKSEIINYLEQKSLKIYDCGTNNTQTVDYPDYAKKVVDIIIEKSAPIGILISDTGIGMSIAANRSSEIRAALCNNILTAENAKAHNDANILILGAKTIDQKIVFDIIDKFLTTQFEGGRHSTRLSKIK.

H12 provides a ligand contact to substrate. H101 functions as the Proton donor in the catalytic mechanism. Position 135 (R135) interacts with substrate.

The protein belongs to the LacAB/RpiB family.

This is Putative sugar phosphate isomerase RC0402 from Rickettsia conorii (strain ATCC VR-613 / Malish 7).